A 165-amino-acid chain; its full sequence is Cyclic pyranopterin monophosphate synthase (165 aa).

Residues 76-78 (LCH) and 114-115 (ME) each bind substrate. Residue D129 is part of the active site.

It belongs to the MoaC family. As to quaternary structure, homohexamer; trimer of dimers.

It catalyses the reaction (8S)-3',8-cyclo-7,8-dihydroguanosine 5'-triphosphate = cyclic pyranopterin phosphate + diphosphate. The protein operates within cofactor biosynthesis; molybdopterin biosynthesis. Functionally, catalyzes the conversion of (8S)-3',8-cyclo-7,8-dihydroguanosine 5'-triphosphate to cyclic pyranopterin monophosphate (cPMP). In Brucella canis (strain ATCC 23365 / NCTC 10854 / RM-666), this protein is Cyclic pyranopterin monophosphate synthase.